Reading from the N-terminus, the 342-residue chain is Spermidine synthase (342 aa).

The tract at residues 9–42 (MKGTELPVKRPREEEAETEMEAANNSNNGCEKEE) is disordered. Positions 52 to 289 (PGWFSEISPL…GMIGFMLCST (238 aa)) constitute a PABS domain. Gln83 contributes to the S-adenosyl 3-(methylsulfanyl)propylamine binding site. Putrescine is bound at residue Tyr113. S-adenosyl 3-(methylsulfanyl)propylamine contacts are provided by residues Gln114, Asp138, Glu158, 189 to 190 (DG), and Asp208. Asp208 acts as the Proton acceptor in catalysis. Putrescine contacts are provided by residues 208 to 211 (DSSD) and Tyr277.

The protein belongs to the spermidine/spermine synthase family.

The enzyme catalyses S-adenosyl 3-(methylsulfanyl)propylamine + putrescine = S-methyl-5'-thioadenosine + spermidine + H(+). It functions in the pathway amine and polyamine biosynthesis; spermidine biosynthesis; spermidine from putrescine: step 1/1. The chain is Spermidine synthase (SPDSYN) from Solanum lycopersicum (Tomato).